A 354-amino-acid chain; its full sequence is Uroporphyrinogen decarboxylase (354 aa).

Residues 27–31 (RQAGR), F46, D77, Y154, T209, and H327 contribute to the substrate site.

The protein belongs to the uroporphyrinogen decarboxylase family. As to quaternary structure, homodimer.

It is found in the cytoplasm. It catalyses the reaction uroporphyrinogen III + 4 H(+) = coproporphyrinogen III + 4 CO2. The protein operates within porphyrin-containing compound metabolism; protoporphyrin-IX biosynthesis; coproporphyrinogen-III from 5-aminolevulinate: step 4/4. Its function is as follows. Catalyzes the decarboxylation of four acetate groups of uroporphyrinogen-III to yield coproporphyrinogen-III. The protein is Uroporphyrinogen decarboxylase of Escherichia coli O157:H7.